The primary structure comprises 128 residues: Sulfurtransferase TusD (128 aa).

Cys-78 (cysteine persulfide intermediate) is an active-site residue.

Belongs to the DsrE/TusD family. In terms of assembly, heterohexamer, formed by a dimer of trimers. The hexameric TusBCD complex contains 2 copies each of TusB, TusC and TusD. The TusBCD complex interacts with TusE.

The protein localises to the cytoplasm. Functionally, part of a sulfur-relay system required for 2-thiolation of 5-methylaminomethyl-2-thiouridine (mnm(5)s(2)U) at tRNA wobble positions. Accepts sulfur from TusA and transfers it in turn to TusE. The protein is Sulfurtransferase TusD of Shigella boydii serotype 18 (strain CDC 3083-94 / BS512).